The primary structure comprises 493 residues: Endothelial lipase (493 aa).

An N-terminal signal peptide occupies residues 1 to 23 (MRDPVFLLGFWSLYCCFPAGSLT). A disulfide bridge connects residues C66 and C79. N-linked (GlcNAc...) asparagine glycosylation is found at N67 and N82. S171 functions as the Nucleophile in the catalytic mechanism. The active-site Charge relay system is the D195. An intrachain disulfide couples C254 to C274. Catalysis depends on H276, which acts as the Charge relay system. 2 cysteine pairs are disulfide-bonded: C299/C318 and C310/C313. 327 to 339 (KMRKKRNSKMYLK) is a binding site for heparin. The PLAT domain maps to 349 to 484 (YHYQLKVHMF…SPGQELWFYK (136 aa)). N395 carries an N-linked (GlcNAc...) asparagine glycan. C465 and C485 are joined by a disulfide.

It belongs to the AB hydrolase superfamily. Lipase family. As to quaternary structure, head to tail Homodimer. Interacts with apolipoprotein C-2.

The protein resides in the secreted. The enzyme catalyses a triacylglycerol + H2O = a diacylglycerol + a fatty acid + H(+). It catalyses the reaction a 1,2-diacyl-sn-glycero-3-phosphocholine + H2O = a 2-acyl-sn-glycero-3-phosphocholine + a fatty acid + H(+). The catalysed reaction is 1,2,3-tri-(9Z-octadecenoyl)-glycerol + H2O = di-(9Z)-octadecenoylglycerol + (9Z)-octadecenoate + H(+). It carries out the reaction 1,2,3-tributanoylglycerol + H2O = dibutanoylglycerol + butanoate + H(+). The enzyme catalyses 1,2-dihexadecanoyl-sn-glycero-3-phosphocholine + H2O = hexadecanoyl-sn-glycero-3-phosphocholine + hexadecanoate + H(+). Its function is as follows. Exerts both phospholipase and triglyceride lipase activities. More active as a phospholipase than a triglyceride lipase. Hydrolyzes triglycerides, both with short-chain fatty acyl groups (tributyrin) and long-chain fatty acyl groups (triolein) with similar levels of activity toward both types of substrates. Hydrolyzes high density lipoproteins (HDL) more efficiently than other lipoproteins. This is Endothelial lipase (Lipg) from Rattus norvegicus (Rat).